Reading from the N-terminus, the 134-residue chain is Ribonuclease VapC2 (134 aa).

One can recognise a PINc domain in the interval 3-124 (YMLDTNICVY…TNNIKEFKRI (122 aa)). Asp-6 provides a ligand contact to Mg(2+).

This sequence belongs to the PINc/VapC protein family. In terms of assembly, forms complexes with VapB2; probably VapC2(4):VapB2(2) in the absence of DNA, and VapC2(4):VapB2(4) in the presence of DNA. Crystallizes as heterodimers with stoichiometry VapC2(4):VapB2(4) in the presence of its probable promoter DNA. The heterodimers are in contact via alternative VapC-VapC and VapB-VapB interactions. This subunit does not contact DNA. It depends on Mg(2+) as a cofactor.

Toxic component of a type II toxin-antitoxin (TA) system. Has ssRNase activity. Upon expression in E.coli or S.cerevisiae inhibits growth in liquid culture; in S.cerevisiae its expression leads to apoptosis-like characteristics. Rapidly induces apoptosis (within 2 hours) upon microinjection into mouse fibroblasts (L929 line); pretreatment of cells with dexamethasone protects them. Probably contributes to host cell death if bacterial cell lysis occurs during host infection. Its toxic effect is neutralized by coexpression with cognate antitoxin VapB2, its RNase activity is partially inhibited in vitro by VapB2. This chain is Ribonuclease VapC2, found in Rickettsia felis (strain ATCC VR-1525 / URRWXCal2) (Rickettsia azadi).